The sequence spans 213 residues: Nucleolar protein 12 (213 aa).

Residues 33–96 (GFHKRKVERK…RLVTAKTESV (64 aa)) adopt a coiled-coil conformation. Residues 118 to 213 (ARLLGLTPPE…LTGKARHSGE (96 aa)) are disordered. Composition is skewed to basic residues over residues 170 to 182 (AHSRKKVKRKHPR) and 198 to 213 (KAQRRRLTGKARHSGE).

It belongs to the RRP17 family. Interacts with KIAA1191.

The protein resides in the nucleus. The protein localises to the nucleolus. It localises to the cytoplasm. In terms of biological role, multifunctional RNA binding protein that plays a role in RNA metabolism and DNA maintenance. Participates in the resolution of DNA stress and the maintenance of genome integrity by localizing to sites of DNA insults. Also plays a role in proper nucleolar organization by limiting nucleolar size and regulating nucleolar number. Mechanistically, regulates the nucleolar levels of fibrillarin and nucleolin, two key players in pre-rRNA processing and ribosome assembly. The polypeptide is Nucleolar protein 12 (NOL12) (Homo sapiens (Human)).